Here is a 489-residue protein sequence, read N- to C-terminus: Putative ATP-dependent RNA helicase T26G10.1 (489 aa).

The Q motif motif lies at 44-72; the sequence is KSFAELGVSQPLCDACQRLGWMKPSKIQQ. Positions 75–246 constitute a Helicase ATP-binding domain; it reads LPHALQGKDV…RASLRDPARV (172 aa). 88–95 serves as a coordination point for ATP; the sequence is AETGSGKT. Positions 194–197 match the DEAD box motif; that stretch reads DEAD. In terms of domain architecture, Helicase C-terminal spans 257-417; sequence NLKQHYIFVP…EYKCVENEVM (161 aa). The interval 433–489 is disordered; the sequence is EMKEMDEKKKSGKKRRQNDDFGDTEESGGRFKMGIKSMGGRGGSGGGRGGKKKKMSK. Over residues 469–480 the composition is skewed to gly residues; that stretch reads SMGGRGGSGGGR.

The protein belongs to the DEAD box helicase family. DDX47/RRP3 subfamily.

Its subcellular location is the nucleus. It catalyses the reaction ATP + H2O = ADP + phosphate + H(+). Functionally, probable ATP-dependent RNA helicase which may be involved in ribosome biogenesis. The sequence is that of Putative ATP-dependent RNA helicase T26G10.1 from Caenorhabditis elegans.